The primary structure comprises 404 residues: Alanyl-tRNA editing protein AlaX-L (404 aa).

H104, H108, C202, and H206 together coordinate Zn(2+).

Belongs to the class-II aminoacyl-tRNA synthetase family. Editing domain AlaX-L subfamily. Zn(2+) is required as a cofactor.

Its subcellular location is the cytoplasm. Functionally, functions in trans to edit the amino acid moiety from mischarged charged tRNA(Ala). The polypeptide is Alanyl-tRNA editing protein AlaX-L (alaXL) (Pyrococcus horikoshii (strain ATCC 700860 / DSM 12428 / JCM 9974 / NBRC 100139 / OT-3)).